The chain runs to 398 residues: Probable transcription factor PosF21 (398 aa).

2 disordered regions span residues 1-46 (MDKE…HDIS) and 112-150 (ATSSAQVGEPSGTAWKNETMMQTGTGSTSNPQNTVNSLG). The span at 7–19 (PAPPCGGLPPPSP) shows a compositional bias: pro residues. Positions 125-148 (AWKNETMMQTGTGSTSNPQNTVNS) are enriched in polar residues. A bZIP domain is found at 201 to 264 (DPKRAKRIWA…NGLTVENNEL (64 aa)). A basic motif region spans residues 203-224 (KRAKRIWANRQSAARSKERKTR). The tract at residues 229-264 (LERKVQTLQTEATTLSAQLTLLQRDTNGLTVENNEL) is leucine-zipper.

Belongs to the bZIP family.

It localises to the nucleus. Functionally, putative transcription factor with an activatory role. This is Probable transcription factor PosF21 (POSF21) from Arabidopsis thaliana (Mouse-ear cress).